We begin with the raw amino-acid sequence, 321 residues long: Beta-porphyranase B (321 aa).

A signal peptide spans 1–20 (MRKTVLYLSAASLFLSSYTL). One can recognise a GH16 domain in the interval 31–319 (EHIKNLPEAP…WVRAYKLVPI (289 aa)). Trp72, Arg76, Glu173, Glu178, and Glu284 together coordinate substrate. The active-site Nucleophile is Glu173. Residue Glu178 is the Proton donor of the active site.

It belongs to the glycosyl hydrolase 16 family.

It catalyses the reaction Hydrolysis of beta-D-galactopyranose-(1-&gt;4)-alpha-L-galactopyranose-6-sulfate linkages in porphyran.. Functionally, cleaves the sulfated polysaccharide porphyran at the (1-&gt;4) linkages between beta-D-galactopyranose and alpha-L-galactopyranose-6-sulfate, forming mostly the disaccharide alpha-L-galactopyranose-6-sulfate-(1-&gt;3)-beta-D-galactose. Some longer oligosaccharides of even number of residues are also observed. Inactive on the non-sulfated agarose portion of the porphyran backbone. This Phocaeicola plebeius (strain DSM 17135 / JCM 12973 / CCUG 54634 / M2) (Bacteroides plebeius) protein is Beta-porphyranase B.